The following is a 310-amino-acid chain: Calcium homeostasis modulator protein 5 (310 aa).

A run of 4 helical transmembrane segments spans residues 17-37 (TIGY…FSMV), 49-69 (FPYG…VGFF), 101-121 (LIKV…VALL), and 181-201 (QILG…GTCY).

It belongs to the CALHM family.

It localises to the membrane. Functionally, pore-forming subunit of a voltage-gated ion channel. The chain is Calcium homeostasis modulator protein 5 (calhm5.1) from Danio rerio (Zebrafish).